A 341-amino-acid polypeptide reads, in one-letter code: Alpha-1,4-N-acetylglucosaminyltransferase (341 aa).

Residues M1–E4 lie on the Cytoplasmic side of the membrane. The helical; Signal-anchor for type II membrane protein transmembrane segment at I5–M25 threads the bilayer. Residues R26 to R341 lie on the Lumenal side of the membrane. The N-linked (GlcNAc...) asparagine glycan is linked to N100. A DXD motif motif is present at residues D168–D170.

The protein belongs to the glycosyltransferase 32 family.

It is found in the golgi apparatus membrane. It functions in the pathway protein modification; protein glycosylation. Catalyzes the transfer of N-acetylglucosamine (GlcNAc) to core 2 branched O-glycans. Necessary for the synthesis of type III mucin which is specifically produced in the stomach, duodenum, and pancreatic duct. May protect against inflammation-associated gastric adenocarcinoma. In Mus musculus (Mouse), this protein is Alpha-1,4-N-acetylglucosaminyltransferase.